Consider the following 137-residue polypeptide: Large ribosomal subunit protein uL16 (137 aa).

The protein belongs to the universal ribosomal protein uL16 family. Part of the 50S ribosomal subunit.

Functionally, binds 23S rRNA and is also seen to make contacts with the A and possibly P site tRNAs. The sequence is that of Large ribosomal subunit protein uL16 from Wolbachia pipientis wMel.